Reading from the N-terminus, the 467-residue chain is 3-isopropylmalate dehydratase large subunit (467 aa).

3 residues coordinate [4Fe-4S] cluster: C349, C408, and C411.

It belongs to the aconitase/IPM isomerase family. LeuC type 1 subfamily. Heterodimer of LeuC and LeuD. The cofactor is [4Fe-4S] cluster.

It catalyses the reaction (2R,3S)-3-isopropylmalate = (2S)-2-isopropylmalate. The protein operates within amino-acid biosynthesis; L-leucine biosynthesis; L-leucine from 3-methyl-2-oxobutanoate: step 2/4. Catalyzes the isomerization between 2-isopropylmalate and 3-isopropylmalate, via the formation of 2-isopropylmaleate. The chain is 3-isopropylmalate dehydratase large subunit from Dinoroseobacter shibae (strain DSM 16493 / NCIMB 14021 / DFL 12).